The chain runs to 802 residues: Exocyst complex component 6 (802 aa).

This sequence belongs to the SEC15 family. As to quaternary structure, the exocyst complex is composed of EXOC1, EXOC2, EXOC3, EXOC4, EXOC5, EXOC6, EXOC7 and EXOC8. Interacts with CNTRL. Interacts with RAB11A in a GTP-dependent manner.

It localises to the cytoplasm. The protein resides in the perinuclear region. Its subcellular location is the cell projection. It is found in the growth cone. The protein localises to the midbody. It localises to the midbody ring. Functionally, component of the exocyst complex involved in the docking of exocytic vesicles with fusion sites on the plasma membrane. Together with RAB11A, RAB3IP, RAB8A, PARD3, PRKCI, ANXA2, CDC42 and DNMBP promotes transcytosis of PODXL to the apical membrane initiation sites (AMIS), apical surface formation and lumenogenesis. This is Exocyst complex component 6 (Exoc6) from Mus musculus (Mouse).